Reading from the N-terminus, the 465-residue chain is UDP-N-acetylmuramate--L-alanine ligase (465 aa).

Residue 112–118 (GTHGKTT) coordinates ATP.

Belongs to the MurCDEF family.

The protein resides in the cytoplasm. It carries out the reaction UDP-N-acetyl-alpha-D-muramate + L-alanine + ATP = UDP-N-acetyl-alpha-D-muramoyl-L-alanine + ADP + phosphate + H(+). The protein operates within cell wall biogenesis; peptidoglycan biosynthesis. Functionally, cell wall formation. This is UDP-N-acetylmuramate--L-alanine ligase from Janthinobacterium sp. (strain Marseille) (Minibacterium massiliensis).